A 1709-amino-acid chain; its full sequence is Acrosomal protein KIAA1210 (1709 aa).

Disordered stretches follow at residues 207–226 (PVRE…GSKA), 239–275 (PERS…SKVP), 451–663 (PNLD…AEKT), 763–973 (PPRS…MAVE), 1211–1382 (LKRG…SVNA), 1408–1516 (TKKF…GRGH), 1539–1571 (ADKQ…QSDY), and 1589–1653 (FKAH…KSVG). The span at 257–272 (PQQRSHISRTLPKPRS) shows a compositional bias: basic residues. A compositionally biased stretch (basic and acidic residues) spans 473 to 490 (EEEKSITKPKEINEKKLG). Composition is skewed to polar residues over residues 494–505 (ADSSSQKQNNKT) and 514–527 (DQAP…SQGY). The segment covering 595 to 608 (EQPTTSQPETTTPQ) has biased composition (low complexity). Residues 651–663 (PYHEDAASGAEKT) are compositionally biased toward basic and acidic residues. Over residues 777 to 794 (EEVSSDSENIPEEGDGSE) the composition is skewed to acidic residues. Composition is skewed to polar residues over residues 886–941 (KNQQ…QSDS), 1288–1299 (FKEQLSPRQLSQ), 1332–1350 (HSSQ…SSKG), 1366–1376 (PSSSPFQQQVH), and 1457–1469 (DGNN…LSNQ). The span at 1502–1513 (SVPSGPISSSVG) shows a compositional bias: low complexity. Over residues 1542-1552 (QQSRPKSESMA) the composition is skewed to basic and acidic residues.

Interacts with TOP2B.

Its subcellular location is the cytoplasmic vesicle. It is found in the secretory vesicle. It localises to the acrosome. In Homo sapiens (Human), this protein is Acrosomal protein KIAA1210.